Consider the following 98-residue polypeptide: NADH-ubiquinone oxidoreductase chain 4L (98 aa).

A run of 3 helical transmembrane segments spans residues 1–21 (MTPT…GMLI), 29–49 (SLLC…LIAL), and 61–81 (IILL…LVSI).

Belongs to the complex I subunit 4L family. In terms of assembly, core subunit of respiratory chain NADH dehydrogenase (Complex I) which is composed of 45 different subunits.

Its subcellular location is the mitochondrion inner membrane. It carries out the reaction a ubiquinone + NADH + 5 H(+)(in) = a ubiquinol + NAD(+) + 4 H(+)(out). In terms of biological role, core subunit of the mitochondrial membrane respiratory chain NADH dehydrogenase (Complex I) which catalyzes electron transfer from NADH through the respiratory chain, using ubiquinone as an electron acceptor. Part of the enzyme membrane arm which is embedded in the lipid bilayer and involved in proton translocation. The polypeptide is NADH-ubiquinone oxidoreductase chain 4L (MT-ND4L) (Macaca maura (Moor macaque)).